We begin with the raw amino-acid sequence, 356 residues long: Ferrochelatase (356 aa).

Fe cation contacts are provided by H214 and E295.

It belongs to the ferrochelatase family.

It is found in the cytoplasm. It catalyses the reaction heme b + 2 H(+) = protoporphyrin IX + Fe(2+). It participates in porphyrin-containing compound metabolism; protoheme biosynthesis; protoheme from protoporphyrin-IX: step 1/1. Its function is as follows. Catalyzes the ferrous insertion into protoporphyrin IX. This is Ferrochelatase from Paraburkholderia phytofirmans (strain DSM 17436 / LMG 22146 / PsJN) (Burkholderia phytofirmans).